Consider the following 317-residue polypeptide: Nucleoside ABC transporter permease protein NupC (317 aa).

Helical transmembrane passes span Ile-9 to Val-29, Gly-35 to Phe-55, Met-62 to Phe-82, Ile-98 to Val-118, Gly-132 to Thr-151, Leu-155 to Phe-172, Ala-203 to Ile-223, Gly-225 to Phe-245, Ile-251 to Gly-271, and Met-286 to Pro-306.

This sequence belongs to the binding-protein-dependent transport system permease family. The complex is composed of two ATP-binding proteins (NupA), two transmembrane proteins (NupB and NupC) and a solute-binding protein (BmpA).

It localises to the cell membrane. Functionally, part of an ABC transporter complex involved in the uptake of all common nucleosides. Responsible for the translocation of the substrate across the membrane. The sequence is that of Nucleoside ABC transporter permease protein NupC from Lactococcus lactis subsp. cremoris (strain MG1363).